The primary structure comprises 297 residues: Indole-3-glycerol phosphate synthase (297 aa).

The protein belongs to the TrpC family.

It carries out the reaction 1-(2-carboxyphenylamino)-1-deoxy-D-ribulose 5-phosphate + H(+) = (1S,2R)-1-C-(indol-3-yl)glycerol 3-phosphate + CO2 + H2O. The protein operates within amino-acid biosynthesis; L-tryptophan biosynthesis; L-tryptophan from chorismate: step 4/5. In Trichodesmium erythraeum (strain IMS101), this protein is Indole-3-glycerol phosphate synthase.